Here is a 202-residue protein sequence, read N- to C-terminus: Na(+)-translocating NADH-quinone reductase subunit E (202 aa).

A run of 6 helical transmembrane segments spans residues 5 to 25 (VSLF…FLGM), 35 to 55 (VSTA…TVPL), 81 to 101 (FLGL…LEMF), 114 to 134 (GVFL…LFMV), 144 to 164 (LTYG…LAGI), and 180 to 200 (LGIT…FGGM).

Belongs to the NqrDE/RnfAE family. In terms of assembly, composed of six subunits; NqrA, NqrB, NqrC, NqrD, NqrE and NqrF.

It localises to the cell inner membrane. The catalysed reaction is a ubiquinone + n Na(+)(in) + NADH + H(+) = a ubiquinol + n Na(+)(out) + NAD(+). Its function is as follows. NQR complex catalyzes the reduction of ubiquinone-1 to ubiquinol by two successive reactions, coupled with the transport of Na(+) ions from the cytoplasm to the periplasm. NqrA to NqrE are probably involved in the second step, the conversion of ubisemiquinone to ubiquinol. The chain is Na(+)-translocating NADH-quinone reductase subunit E from Psychrobacter sp. (strain PRwf-1).